Consider the following 206-residue polypeptide: Large ribosomal subunit protein uL4 (206 aa).

Residues 44 to 77 (RQGTRAQKDRQTVKHSTKKPWRQKGTGRARAGMT) form a disordered region. Positions 56 to 70 (VKHSTKKPWRQKGTG) are enriched in basic residues.

The protein belongs to the universal ribosomal protein uL4 family. As to quaternary structure, part of the 50S ribosomal subunit.

Functionally, one of the primary rRNA binding proteins, this protein initially binds near the 5'-end of the 23S rRNA. It is important during the early stages of 50S assembly. It makes multiple contacts with different domains of the 23S rRNA in the assembled 50S subunit and ribosome. Forms part of the polypeptide exit tunnel. This Methylibium petroleiphilum (strain ATCC BAA-1232 / LMG 22953 / PM1) protein is Large ribosomal subunit protein uL4.